A 240-amino-acid polypeptide reads, in one-letter code: Glutathione S-transferase omega-1 (240 aa).

At S2 the chain carries N-acetylserine. The GST N-terminal domain maps to 22–101 (GQIRVYSMRF…YLDEAYPEKK (80 aa)). C32 serves as the catalytic Nucleophile. K57 carries the N6-acetyllysine modification. Residues K59, V72, and 85-86 (ES) each bind glutathione. The 122-residue stretch at 106 to 227 (DPYKKARQKM…AKTYREYLNL (122 aa)) folds into the GST C-terminal domain. S129 is subject to Phosphoserine. K152 bears the N6-acetyllysine mark.

It belongs to the GST superfamily. Omega family. As to quaternary structure, homodimer.

It is found in the cytoplasm. The protein localises to the cytosol. It catalyses the reaction RX + glutathione = an S-substituted glutathione + a halide anion + H(+). The catalysed reaction is L-dehydroascorbate + 2 glutathione = glutathione disulfide + L-ascorbate. The enzyme catalyses methylarsonate + 2 glutathione + H(+) = methylarsonous acid + glutathione disulfide + H2O. Its function is as follows. Exhibits glutathione-dependent thiol transferase and dehydroascorbate reductase activities. Has S-(phenacyl)glutathione reductase activity. Also has glutathione S-transferase activity. Participates in the biotransformation of inorganic arsenic and reduces monomethylarsonic acid (MMA) and dimethylarsonic acid. The protein is Glutathione S-transferase omega-1 (Gsto1) of Mus musculus (Mouse).